The primary structure comprises 617 residues: Na(+)/H(+) antiporter NhaA 1 (617 aa).

Residues 1–26 form a disordered region; that stretch reads MTVTEPATQRGFPLLPSRLSRGSKAT. A na(+)/H(+) antiporter NhaA region spans residues 1–433; the sequence is MTVTEPATQR…GWAIFRITDW (433 aa). The next 11 membrane-spanning stretches (helical) occupy residues 33 to 53, 75 to 95, 113 to 133, 141 to 161, 171 to 191, 198 to 218, 234 to 254, 304 to 324, 341 to 361, 378 to 398, and 411 to 431; these read AAAL…SPWA, MTVK…IVGL, AVPV…FLAF, HAWG…LAII, LFLL…IAVL, VAPL…RYLP, IALY…ALLI, VSPV…AGVL, GIVA…TWLI, IAGG…IVDI, and IGVL…FRIT. The Thioredoxin domain maps to 434 to 617; the sequence is LSPPEPVGLK…LIRALEAGRG (184 aa).

This sequence in the N-terminal section; belongs to the NhaA Na(+)/H(+) (TC 2.A.33) antiporter family.

Its subcellular location is the cell membrane. It catalyses the reaction Na(+)(in) + 2 H(+)(out) = Na(+)(out) + 2 H(+)(in). Its function is as follows. Na(+)/H(+) antiporter that extrudes sodium in exchange for external protons. This chain is Na(+)/H(+) antiporter NhaA 1, found in Mycolicibacterium gilvum (strain PYR-GCK) (Mycobacterium gilvum (strain PYR-GCK)).